Consider the following 454-residue polypeptide: Laccase-3 (454 aa).

2 Plastocyanin-like domains span residues 1–95 and 101–252; these read PGPT…GPAT and DLGV…YSGA. N24 carries an N-linked (GlcNAc...) asparagine glycan. Residues H29, H31, H73, and H75 each contribute to the Cu cation site. N138, N169, N218, N314, and N334 each carry an N-linked (GlcNAc...) asparagine glycan. Residues 319–454 enclose the Plastocyanin-like 3 domain; it reads DVDWKKPILQ…SEGLAVQFQG (136 aa). The Cu cation site is built by H375, H378, and H380. Residue N395 is glycosylated (N-linked (GlcNAc...) asparagine). Positions 437, 438, 439, and 443 each coordinate Cu cation.

The protein belongs to the multicopper oxidase family. Requires Cu cation as cofactor.

Its subcellular location is the secreted. It catalyses the reaction 4 hydroquinone + O2 = 4 benzosemiquinone + 2 H2O. Its function is as follows. Lignin degradation and detoxification of lignin-derived products. The protein is Laccase-3 (lcc3) of Botryotinia fuckeliana (Noble rot fungus).